We begin with the raw amino-acid sequence, 457 residues long: CUB1 family protein C30C2.08 (457 aa).

Coiled-coil stretches lie at residues 119–174 (TQND…NISK) and 418–448 (QELV…EERE).

The protein belongs to the CUB1 family.

It localises to the cytoplasm. The protein resides in the nucleus. Involved in bleomycin tolerance with links to DNA repair and/or proteasome function. The sequence is that of CUB1 family protein C30C2.08 from Schizosaccharomyces pombe (strain 972 / ATCC 24843) (Fission yeast).